A 320-amino-acid chain; its full sequence is Olfactory receptor 51E2 (320 aa).

Residues 1–27 (MSSCNFTHATFLLIGIPGLEEAHFWFG) are Extracellular-facing. N5 carries an N-linked (GlcNAc...) asparagine glycan. A helical transmembrane segment spans residues 28–48 (FPLLSMYAVALFGNCIVVFIV). Residues 49 to 53 (RTERS) are Cytoplasmic-facing. The chain crosses the membrane as a helical span at residues 54–74 (LHAPMYLFLCMLAAIDLALST). The Extracellular portion of the chain corresponds to 75-98 (STMPKILALFWFDSREITFDACLA). Residues C96 and C178 are joined by a disulfide bond. The helical transmembrane segment at 99–119 (QMFFIHTLSAIESTILLAMAF) threads the bilayer. The Cytoplasmic segment spans residues 120-141 (DRYVAICHPLRHAAVLNNTVTV). The chain crosses the membrane as a helical span at residues 142-162 (QIGMVALVRGSLFFFPLPLLI). Residues 163 to 200 (KRLAFCHSNVLSHSYCVHQDVMKLAYTDTLPNVVYGLT) are Extracellular-facing. Residues 201–221 (AILLVMGVDVMFISLSYFLII) form a helical membrane-spanning segment. Residues 222–239 (RTVLQLPSKSERAKAFGT) lie on the Cytoplasmic side of the membrane. A helical transmembrane segment spans residues 240 to 260 (CVSHISVVLAFYVPLIGLSVV). Residues 261-269 (HRFGNSLDP) lie on the Extracellular side of the membrane. Residues 270–290 (IVHVLMGDVYLLLPPVINPII) form a helical membrane-spanning segment. At 291–320 (YGAKTKQIRTRVLAMFKISCDKDIEAGGNT) the chain is on the cytoplasmic side.

The protein belongs to the G-protein coupled receptor 1 family. In terms of tissue distribution, in brain, expressed in medulla oblongata by cells close to the fourth ventricle, in the area postrema, the nucleus tractus solitarius. Expressed in olfactory epithelium and vomeronasal organ. Expressed in kidney by large renal vessels, renal afferent arterioles, and extrarenal vascular beds. In small resistance vessels the expression is restricted to cells of the juxtaglomerular afferent arteriole, which mediate renin secretion. Also detected in small blood vessels in a variety of tissues including heart, diaphragm, skeletal muscle, and skin. In the heart, esophagus, and stomach it is detected in axons of autonomic neurons and neurons of the enteric plexus. Also detected in colon and liver. Expressed in the glomus cells of the carotid body.

Its subcellular location is the cell membrane. It is found in the early endosome membrane. Its function is as follows. Olfactory receptor. The activity of this receptor is probably mediated by G-proteins which induce elevation of intracellular Ca(2+), cAMP and activation of phosphorylation of the protein kinases PKA and MAPK3/MAPK1. Activation of OR51E2 may affect melanocyte proliferation, differentiation, and melanogenesis and may increase proliferation and migration of primary retinal pigment epithelial (RPE) cells. Activated by the short chain fatty acids (SCFA), acetate and propionate. In response to SCFA, may positively regulate renin secretion and increase blood pressure. May also be activated by steroid hormones and regulate cell proliferation. Activated by L-lactate in glomus cells. The protein is Olfactory receptor 51E2 (Or51e2) of Mus musculus (Mouse).